A 217-amino-acid chain; its full sequence is Uracil-DNA glycosylase (217 aa).

Residue Asp-62 is the Proton acceptor of the active site.

Belongs to the uracil-DNA glycosylase (UDG) superfamily. UNG family.

Its subcellular location is the cytoplasm. It carries out the reaction Hydrolyzes single-stranded DNA or mismatched double-stranded DNA and polynucleotides, releasing free uracil.. Excises uracil residues from the DNA which can arise as a result of misincorporation of dUMP residues by DNA polymerase or due to deamination of cytosine. The chain is Uracil-DNA glycosylase from Streptococcus pyogenes serotype M1.